A 365-amino-acid polypeptide reads, in one-letter code: 1-acyl-sn-glycerol-3-phosphate acyltransferase epsilon (365 aa).

The chain crosses the membrane as a helical span at residues 15 to 35 (LLPSVLLLGSAPTYLLAWTLW). The short motif at 93–98 (HQSTVD) is the HXXXXD motif element. Residues 345-365 (LYMGTWLYGTLLGCLWFVIKA) traverse the membrane as a helical segment.

Belongs to the 1-acyl-sn-glycerol-3-phosphate acyltransferase family. As to expression, widely expressed.

It localises to the endoplasmic reticulum membrane. Its subcellular location is the nucleus envelope. The protein resides in the mitochondrion. It carries out the reaction a 1-acyl-sn-glycero-3-phosphate + an acyl-CoA = a 1,2-diacyl-sn-glycero-3-phosphate + CoA. The enzyme catalyses 1-(9Z-octadecenoyl)-sn-glycero-3-phosphate + tetradecanoyl-CoA = 1-(9Z)-octadecenoyl-2-tetradecanoyl-sn-glycero-3-phosphate + CoA. The catalysed reaction is pentadecanoyl-CoA + 1-(9Z-octadecenoyl)-sn-glycero-3-phosphate = 1-(9Z)-octadecenoyl-2-pentadecanoyl-sn-glycero-3-phosphate + CoA. It catalyses the reaction 1-(9Z-octadecenoyl)-sn-glycero-3-phosphate + octadecanoyl-CoA = 1-(9Z-octadecenoyl)-2-octadecanoyl-sn-glycero-3-phosphate + CoA. It carries out the reaction nonadecanoyl-CoA + 1-(9Z-octadecenoyl)-sn-glycero-3-phosphate = 1-(9Z)-octadecenoyl-2-nonadecanoyl-sn-glycero-3-phosphate + CoA. The enzyme catalyses 1-(9Z-octadecenoyl)-sn-glycero-3-phosphoethanolamine + (9Z)-octadecenoyl-CoA = 1,2-di-(9Z-octadecenoyl)-sn-glycero-3-phosphoethanolamine + CoA. The catalysed reaction is 1-(9Z-octadecenoyl)-sn-glycero-3-phosphocholine + (9Z)-octadecenoyl-CoA = 1,2-di-(9Z-octadecenoyl)-sn-glycero-3-phosphocholine + CoA. It catalyses the reaction 1-(9Z-octadecenoyl)-sn-glycero-3-phospho-(1D-myo-inositol) + (5Z,8Z,11Z,14Z)-eicosatetraenoyl-CoA = 1-(9Z-octadecenoyl)-2-(5Z,8Z,11Z,14Z-eicosatetraenoyl)-sn-glycero-3-phospho-1D-myo-inositol + CoA. It carries out the reaction 1-(9Z-octadecenoyl)-sn-glycero-3-phospho-L-serine + (9Z)-octadecenoyl-CoA = 1,2-di-(9Z)-octadecenoyl-sn-glycero-3-phospho-L-serine + CoA. The enzyme catalyses 1-(9Z-octadecenoyl)-sn-glycero-3-phospho-L-serine + (5Z,8Z,11Z,14Z)-eicosatetraenoyl-CoA = 1-(9Z-octadecenoyl)-2-(5Z,8Z,11Z,14Z-eicosatetraenoyl)-sn-glycero-3-phospho-L-serine + CoA. The catalysed reaction is 1-hexadecanoyl-sn-glycero-3-phosphate + (9Z)-octadecenoyl-CoA = 1-hexadecanoyl-2-(9Z-octadecenoyl)-sn-glycero-3-phosphate + CoA. It catalyses the reaction 1-heptadecanoyl-sn-glycero-3-phosphate + (9Z)-octadecenoyl-CoA = 1-heptadecanoyl-2-(9Z)-octadecenoyl-sn-glycero-3-phosphate + CoA. It carries out the reaction 1-(5Z,8Z,11Z,14Z-eicosatetraenoyl)-sn-glycero-3-phosphate + (9Z)-octadecenoyl-CoA = 1-(5Z,8Z,11Z,14Z)-eicosatetraenoyl-2-(9Z)-octadecenoyl-sn-glycero-3-phosphate + CoA. The enzyme catalyses 1-octadecanoyl-sn-glycero-3-phosphate + (9Z)-octadecenoyl-CoA = 1-octadecanoyl-2-(9Z-octadecenoyl)-sn-glycero-3-phosphate + CoA. The catalysed reaction is 1-(9Z-octadecenoyl)-sn-glycero-3-phosphate + (5Z,8Z,11Z,14Z)-eicosatetraenoyl-CoA = 1-(9Z)-octadecenoyl-2-(5Z,8Z,11Z,14Z)-eicosatetraenoyl-sn-glycero-3-phosphate + CoA. It catalyses the reaction heptadecanoyl-CoA + 1-(9Z-octadecenoyl)-sn-glycero-3-phosphate = 1-(9Z)-octadecenoyl-2-heptadecanoyl-sn-glycero-3-phosphate + CoA. It carries out the reaction 1-(9Z-octadecenoyl)-sn-glycero-3-phosphocholine + (5Z,8Z,11Z,14Z)-eicosatetraenoyl-CoA = 1-(9Z)-octadecenoyl-2-(5Z,8Z,11Z,14Z)-icosatetraenoyl-sn-glycero-3-phosphocholine + CoA. The enzyme catalyses 1-(9Z-octadecenoyl)-sn-glycero-3-phosphate + (9Z)-octadecenoyl-CoA = 1,2-di-(9Z-octadecenoyl)-sn-glycero-3-phosphate + CoA. The catalysed reaction is 1-(9Z-octadecenoyl)-sn-glycero-3-phosphate + hexadecanoyl-CoA = 1-hexadecanoyl-2-(9Z-octadecenoyl)-sn-glycero-3-phosphate + CoA. It participates in phospholipid metabolism; CDP-diacylglycerol biosynthesis; CDP-diacylglycerol from sn-glycerol 3-phosphate: step 2/3. Functionally, converts 1-acyl-sn-glycerol-3-phosphate (lysophosphatidic acid or LPA) into 1,2-diacyl-sn-glycerol-3-phosphate (phosphatidic acid or PA) by incorporating an acyl moiety at the sn-2 position of the glycerol backbone. Acts on LPA containing saturated or unsaturated fatty acids C15:0-C20:4 at the sn-1 position using C18:1-CoA as the acyl donor. Also acts on lysophosphatidylethanolamine using oleoyl-CoA, but not arachidonoyl-CoA, and lysophosphatidylinositol using arachidonoyl-CoA, but not oleoyl-CoA. Activity toward lysophosphatidylglycerol not detectable. The chain is 1-acyl-sn-glycerol-3-phosphate acyltransferase epsilon (Agpat5) from Mus musculus (Mouse).